A 957-amino-acid chain; its full sequence is Glycine dehydrogenase (decarboxylating) (957 aa).

An N6-(pyridoxal phosphate)lysine modification is found at lysine 708.

It belongs to the GcvP family. The glycine cleavage system is composed of four proteins: P, T, L and H. Requires pyridoxal 5'-phosphate as cofactor.

The enzyme catalyses N(6)-[(R)-lipoyl]-L-lysyl-[glycine-cleavage complex H protein] + glycine + H(+) = N(6)-[(R)-S(8)-aminomethyldihydrolipoyl]-L-lysyl-[glycine-cleavage complex H protein] + CO2. Functionally, the glycine cleavage system catalyzes the degradation of glycine. The P protein binds the alpha-amino group of glycine through its pyridoxal phosphate cofactor; CO(2) is released and the remaining methylamine moiety is then transferred to the lipoamide cofactor of the H protein. This Salmonella typhimurium (strain LT2 / SGSC1412 / ATCC 700720) protein is Glycine dehydrogenase (decarboxylating).